A 65-amino-acid chain; its full sequence is MANAQQQVFGGGGGDDAENNDAPQQGSGTQQVNVTGTDDLLDEIDGLLETNAEEFVRSYVQKGGQ.

The segment at Met-1–Asp-38 is disordered. The segment at Asp-21–Tyr-59 is ARC ATPase binding. Polar residues predominate over residues Ala-22 to Val-34. Residue Gln-65 is modified to Deamidated glutamine. An Isoglutamyl lysine isopeptide (Gln-Lys) (interchain with K-? in acceptor proteins) cross-link involves residue Gln-65.

It belongs to the prokaryotic ubiquitin-like protein family. Strongly interacts with the proteasome-associated ATPase ARC through a hydrophobic interface; the interacting region of Pup lies in its C-terminal half. There is one Pup binding site per ARC hexamer ring. Is modified by deamidation of its C-terminal glutamine to glutamate by the deamidase Dop, a prerequisite to the subsequent pupylation process.

The protein operates within protein degradation; proteasomal Pup-dependent pathway. In terms of biological role, protein modifier that is covalently attached to lysine residues of substrate proteins, thereby targeting them for proteasomal degradation. The tagging system is termed pupylation. In Corynebacterium urealyticum (strain ATCC 43042 / DSM 7109), this protein is Prokaryotic ubiquitin-like protein Pup.